We begin with the raw amino-acid sequence, 100 residues long: Large ribosomal subunit protein uL23 (100 aa).

Belongs to the universal ribosomal protein uL23 family. Part of the 50S ribosomal subunit. Contacts protein L29, and trigger factor when it is bound to the ribosome.

In terms of biological role, one of the early assembly proteins it binds 23S rRNA. One of the proteins that surrounds the polypeptide exit tunnel on the outside of the ribosome. Forms the main docking site for trigger factor binding to the ribosome. In Pasteurella multocida (strain Pm70), this protein is Large ribosomal subunit protein uL23.